The following is a 497-amino-acid chain: Succinate-semialdehyde dehydrogenase [NADP(+)] (497 aa).

Glutamate 264 serves as the catalytic Proton acceptor. The active-site Nucleophile is cysteine 298.

It belongs to the aldehyde dehydrogenase family. In terms of assembly, homotetramer.

The protein localises to the cytoplasm. The catalysed reaction is succinate semialdehyde + NAD(+) + H2O = succinate + NADH + 2 H(+). The enzyme catalyses succinate semialdehyde + NADP(+) + H2O = succinate + NADPH + 2 H(+). Its pathway is amino-acid degradation; 4-aminobutanoate degradation. Its activity is regulated as follows. Inhibited by AMP, ADP anf ATP. Functionally, catalyzes the oxidation of succinate semialdehyde to succinate. Can utilize both NAD(+) or NADP(+) as a coenzyme, but has a 2.5-fold lower activity with NADP(+) than with NAD(+). Functions in a gamma-aminobutyrate (GABA) degradation pathway that allows growth utilizing GABA as a nitrogen source. Functions in the GABA shunt, which allows to bypass 2 reactions in the TCA cycle by removing alpha-ketoglutarate from the cycle and feeding succinate and NADH back into the cycle. In Saccharomyces cerevisiae (strain ATCC 204508 / S288c) (Baker's yeast), this protein is Succinate-semialdehyde dehydrogenase [NADP(+)].